The chain runs to 389 residues: tRNA N(3)-cytidine methyltransferase METTL2 (389 aa).

A disordered region spans residues 1–20 (MAASFPEGVPETEDGKRPQF). Trp78, Tyr82, Gly181, Asp206, Asp232, Leu233, and Ile253 together coordinate S-adenosyl-L-methionine.

Belongs to the methyltransferase superfamily. METL family. Monomer. Interacts with DALRD3.

Its subcellular location is the cytoplasm. The enzyme catalyses cytidine(32) in tRNA(Thr) + S-adenosyl-L-methionine = N(3)-methylcytidine(32) in tRNA(Thr) + S-adenosyl-L-homocysteine + H(+). It catalyses the reaction cytidine(32) in tRNA(Arg)(CCU) + S-adenosyl-L-methionine = N(3)-methylcytidine(32) in tRNA(Arg)(CCU) + S-adenosyl-L-homocysteine + H(+). Its function is as follows. S-adenosyl-L-methionine-dependent methyltransferase that mediates N(3)-methylcytidine modification of residue 32 of the tRNA anticodon loop of tRNA(Thr)(UGU) and tRNA(Arg)(CCU). N(3)-methylcytidine methylation by METTL2 requires the N6-threonylcarbamoylation of tRNA (t6A37) by the EKC/KEOPS complex as prerequisite. In Mus musculus (Mouse), this protein is tRNA N(3)-cytidine methyltransferase METTL2.